The following is a 183-amino-acid chain: uncharacterized protein (183 aa).

Belongs to the Bcl-2 family.

This is an uncharacterized protein from Equine herpesvirus 2 (strain 86/87) (EHV-2).